Here is a 265-residue protein sequence, read N- to C-terminus: tRNA(His) guanylyltransferase (265 aa).

Residues Asp29, Gly30, and Asp76 each contribute to the Mg(2+) site. Residues 29 to 34 (DGKGFH) and 75 to 76 (SD) each bind GTP.

Belongs to the tRNA(His) guanylyltransferase family. Mg(2+) is required as a cofactor.

It catalyses the reaction a 5'-end ribonucleotide-tRNA(His) + GTP + ATP + H2O = a 5'-end phospho-guanosine-ribonucleotide-tRNA(His) + AMP + 2 diphosphate + H(+). Functionally, adds a GMP to the 5'-end of tRNA(His) after transcription and RNase P cleavage. The chain is tRNA(His) guanylyltransferase (THG1) from Debaryomyces hansenii (strain ATCC 36239 / CBS 767 / BCRC 21394 / JCM 1990 / NBRC 0083 / IGC 2968) (Yeast).